A 108-amino-acid chain; its full sequence is Colipase B (108 aa).

A signal peptide spans 1–13 (LALLLVALAVAYA). Residues 14-18 (VPDPR) constitute a propeptide, enterostatin, activation peptide. Intrachain disulfides connect Cys30–Cys41, Cys36–Cys52, Cys40–Cys74, Cys62–Cys82, and Cys76–Cys100. Trp65 provides a ligand contact to taurodeoxycholate.

The protein belongs to the colipase family. Forms a 1:1 stoichiometric complex with pancreatic lipase. Expressed by the pancreas.

The protein localises to the secreted. Functionally, colipase is a cofactor of pancreatic lipase. It allows the lipase to anchor itself to the lipid-water interface. Without colipase the enzyme is washed off by bile salts, which have an inhibitory effect on the lipase. In terms of biological role, enterostatin has a biological activity as a satiety signal. This is Colipase B (CLPS2) from Equus caballus (Horse).